The following is a 1296-amino-acid chain: Phosphoribosylformylglycinamidine synthase (1296 aa).

The segment at 304-323 (WPGAATGSGGEIRDEGATGR) is disordered. ATP is bound by residues 306 to 317 (GAATGSGGEIRD) and A677. D678, E717, N721, and D885 together coordinate Mg(2+). ATP is bound at residue S887. A compositionally biased stretch (basic and acidic residues) spans 1000–1013 (PDCADQEHQAKQDE). Residues 1000-1019 (PDCADQEHQAKQDESDPGLN) form a disordered region. A Glutamine amidotransferase type-1 domain is found at 1043 to 1296 (VAVLREQGVN…MFRNARKQLG (254 aa)). Catalysis depends on C1136, which acts as the Nucleophile. Catalysis depends on residues H1261 and E1263.

It in the N-terminal section; belongs to the FGAMS family. Monomer.

It localises to the cytoplasm. It carries out the reaction N(2)-formyl-N(1)-(5-phospho-beta-D-ribosyl)glycinamide + L-glutamine + ATP + H2O = 2-formamido-N(1)-(5-O-phospho-beta-D-ribosyl)acetamidine + L-glutamate + ADP + phosphate + H(+). It functions in the pathway purine metabolism; IMP biosynthesis via de novo pathway; 5-amino-1-(5-phospho-D-ribosyl)imidazole from N(2)-formyl-N(1)-(5-phospho-D-ribosyl)glycinamide: step 1/2. In terms of biological role, phosphoribosylformylglycinamidine synthase involved in the purines biosynthetic pathway. Catalyzes the ATP-dependent conversion of formylglycinamide ribonucleotide (FGAR) and glutamine to yield formylglycinamidine ribonucleotide (FGAM) and glutamate. The sequence is that of Phosphoribosylformylglycinamidine synthase from Yersinia pestis bv. Antiqua (strain Antiqua).